The chain runs to 347 residues: MADVMRVAVAGASGYAGGEILRLLLGHPAYAQGRLTIGAVTAAASAGSPLGEHHPHLTPLAQRVLEPTDAAVLAGHDVVFLALPHGHSAALADQLGADTLIVDCGADFRLTDAAAWERFYGAPHAGSWPYGLPELPGARERLRGARRIAVPGCYPTAALLALLPAMAEDLIEPAVTVVAVSGTSGAGRAAKTDLLGSEVIGSARAYNIAGAHRHTPEIAQGLAAVSGRDVTVSFTPVLIPTSRGILATCTARTTAPLSALRAAYEKTYDAEPFIYLMPEGQLPRTGAVIGSNAAHIAVAVDEAAGVLVAIAAIDNLVKGTAGAAVQSMNLALGWPETQGLSVIGVAP.

Residue Cys-153 is part of the active site.

The protein belongs to the NAGSA dehydrogenase family. Type 1 subfamily.

It localises to the cytoplasm. The enzyme catalyses N-acetyl-L-glutamate 5-semialdehyde + phosphate + NADP(+) = N-acetyl-L-glutamyl 5-phosphate + NADPH + H(+). The protein operates within amino-acid biosynthesis; L-arginine biosynthesis; N(2)-acetyl-L-ornithine from L-glutamate: step 3/4. Its function is as follows. Catalyzes the NADPH-dependent reduction of N-acetyl-5-glutamyl phosphate to yield N-acetyl-L-glutamate 5-semialdehyde. This is N-acetyl-gamma-glutamyl-phosphate reductase from Mycobacterium avium (strain 104).